The sequence spans 557 residues: 2-succinyl-5-enolpyruvyl-6-hydroxy-3-cyclohexene-1-carboxylate synthase (557 aa).

It belongs to the TPP enzyme family. MenD subfamily. In terms of assembly, homodimer. It depends on Mg(2+) as a cofactor. The cofactor is Mn(2+). Thiamine diphosphate is required as a cofactor.

It catalyses the reaction isochorismate + 2-oxoglutarate + H(+) = 5-enolpyruvoyl-6-hydroxy-2-succinyl-cyclohex-3-ene-1-carboxylate + CO2. It functions in the pathway quinol/quinone metabolism; 1,4-dihydroxy-2-naphthoate biosynthesis; 1,4-dihydroxy-2-naphthoate from chorismate: step 2/7. Its pathway is quinol/quinone metabolism; menaquinone biosynthesis. Its function is as follows. Catalyzes the thiamine diphosphate-dependent decarboxylation of 2-oxoglutarate and the subsequent addition of the resulting succinic semialdehyde-thiamine pyrophosphate anion to isochorismate to yield 2-succinyl-5-enolpyruvyl-6-hydroxy-3-cyclohexene-1-carboxylate (SEPHCHC). The polypeptide is 2-succinyl-5-enolpyruvyl-6-hydroxy-3-cyclohexene-1-carboxylate synthase (Staphylococcus aureus (strain Mu3 / ATCC 700698)).